Reading from the N-terminus, the 475-residue chain is Amino acid permease 8 (475 aa).

The disordered stretch occupies residues 1–22; sequence MDAYNNPSAVESGDAAVKSVDD. The Cytoplasmic portion of the chain corresponds to 1–31; that stretch reads MDAYNNPSAVESGDAAVKSVDDDGREKRTGT. The next 2 helical transmembrane spans lie at 32–52 and 53–73; these read FWTA…LSLA and WAIA…FAII. Topologically, residues 74 to 120 are cytoplasmic; sequence TYYTSTLLADCYRSPDSITGTRNYNYMGVVRSYLGGKKVQLCGVAQY. A helical transmembrane segment spans residues 121-141; that stretch reads VNLVGVTIGYTITASISLVAI. Residues 142–157 lie on the Extracellular side of the membrane; the sequence is GKSNCYHDKGHKAKCS. A helical membrane pass occupies residues 158-178; sequence VSNYPYMAAFGIVQIILSQLP. Topologically, residues 179–185 are cytoplasmic; it reads NFHKLSF. A helical transmembrane segment spans residues 186-206; the sequence is LSIIAAVMSFSYASIGIGLAI. Over 207 to 236 the chain is Extracellular; sequence ATVASGKIGKTELTGTVIGVDVTASEKVWK. A helical transmembrane segment spans residues 237 to 257; it reads LFQAIGDIAFSYAFTTILIEI. The Cytoplasmic portion of the chain corresponds to 258-276; that stretch reads QDTLRSSPPENKVMKRASL. Residues 277 to 297 traverse the membrane as a helical segment; it reads VGVSTTTVFYILCGCIGYAAF. At 298–314 the chain is on the extracellular side; that stretch reads GNQAPGDFLTDFGFYEP. A helical membrane pass occupies residues 315-335; sequence YWLIDFANACIALHLIGAYQV. The Cytoplasmic segment spans residues 336–378; sequence YAQPFFQFVEENCNKKWPQSNFINKEYSSKVPLLGKCRVNLFR. The helical transmembrane segment at 379–398 threads the bilayer; it reads LVWRTCYVVLTTFVAMIFPF. Residues 399 to 401 are Extracellular-facing; that stretch reads FNA. The chain crosses the membrane as a helical span at residues 402 to 424; it reads ILGLLGAFAFWPLTVYFPVAMHI. Residues 425–441 are Cytoplasmic-facing; that stretch reads AQAKVKKYSRRWLALNL. A helical membrane pass occupies residues 442–462; it reads LVLVCLIVSALAAVGSIIGLI. Residues 463–475 are Extracellular-facing; the sequence is NSVKSYKPFKNLD.

This sequence belongs to the amino acid/polyamine transporter 2 family. Amino acid/auxin permease (AAAP) (TC 2.A.18.2) subfamily. In terms of tissue distribution, expressed in flower buds, siliques, developing seeds and funiculi.

It localises to the cell membrane. In terms of biological role, amino acid-proton symporter. Stereospecific transporter with a broad specificity for glutamate, aspartate and neutral and acidic amino acids. The protein is Amino acid permease 8 (AAP8) of Arabidopsis thaliana (Mouse-ear cress).